A 256-amino-acid chain; its full sequence is Ribonuclease 3 (256 aa).

Residues 3 to 125 (LDALQQRLGY…IVGAVFLDAG (123 aa)) enclose the RNase III domain. Glu-38 provides a ligand contact to Mg(2+). Asp-42 is an active-site residue. Residues Asp-111 and Glu-114 each contribute to the Mg(2+) site. Glu-114 is a catalytic residue. The 71-residue stretch at 152 to 222 (DAKTLLQEYL…AKLALDEVQK (71 aa)) folds into the DRBM domain. A disordered region spans residues 229-256 (KRSRAERTGKTRKQPVPPDPQLSLRLKE).

The protein belongs to the ribonuclease III family. In terms of assembly, homodimer. Requires Mg(2+) as cofactor.

Its subcellular location is the cytoplasm. The enzyme catalyses Endonucleolytic cleavage to 5'-phosphomonoester.. In terms of biological role, digests double-stranded RNA. Involved in the processing of primary rRNA transcript to yield the immediate precursors to the large and small rRNAs (23S and 16S). Processes some mRNAs, and tRNAs when they are encoded in the rRNA operon. Processes pre-crRNA and tracrRNA of type II CRISPR loci if present in the organism. The chain is Ribonuclease 3 from Cupriavidus pinatubonensis (strain JMP 134 / LMG 1197) (Cupriavidus necator (strain JMP 134)).